Here is a 584-residue protein sequence, read N- to C-terminus: Arginine--tRNA ligase (584 aa).

The 'HIGH' region motif lies at 125 to 135 (PNIAKEMHVGH).

The protein belongs to the class-I aminoacyl-tRNA synthetase family. As to quaternary structure, monomer.

It localises to the cytoplasm. It catalyses the reaction tRNA(Arg) + L-arginine + ATP = L-arginyl-tRNA(Arg) + AMP + diphosphate. The protein is Arginine--tRNA ligase of Thermosynechococcus vestitus (strain NIES-2133 / IAM M-273 / BP-1).